The following is a 70-amino-acid chain: Large ribosomal subunit protein bL31 (70 aa).

Residues Cys16, Cys18, Cys37, and Cys40 each coordinate Zn(2+).

The protein belongs to the bacterial ribosomal protein bL31 family. Type A subfamily. Part of the 50S ribosomal subunit. It depends on Zn(2+) as a cofactor.

Functionally, binds the 23S rRNA. The polypeptide is Large ribosomal subunit protein bL31 (Histophilus somni (strain 2336) (Haemophilus somnus)).